A 479-amino-acid polypeptide reads, in one-letter code: Cell division protein FtsA (479 aa).

The tract at residues 417 to 458 is disordered; sequence QGRQTERKENEQRDNTDRQREDTPKQTVKKKEKTGPSFGDKL. Over residues 420 to 440 the composition is skewed to basic and acidic residues; that stretch reads QTERKENEQRDNTDRQREDTP.

This sequence belongs to the FtsA/MreB family. As to quaternary structure, self-interacts. Interacts with FtsZ.

Its subcellular location is the cell inner membrane. Cell division protein that is involved in the assembly of the Z ring. May serve as a membrane anchor for the Z ring. The chain is Cell division protein FtsA from Porphyromonas gingivalis (strain ATCC BAA-308 / W83).